We begin with the raw amino-acid sequence, 364 residues long: Ribosomal RNA large subunit methyltransferase F (364 aa).

The tract at residues 1–52 (MPKPAIKTAAKLAMSSAGKRGKPSTPKSLAKPQTTKPKTASKLKAKHGEQKR) is disordered. Residues 25-38 (TPKSLAKPQTTKPK) are compositionally biased toward polar residues.

The protein belongs to the methyltransferase superfamily. METTL16/RlmF family.

Its subcellular location is the cytoplasm. The catalysed reaction is adenosine(1618) in 23S rRNA + S-adenosyl-L-methionine = N(6)-methyladenosine(1618) in 23S rRNA + S-adenosyl-L-homocysteine + H(+). Functionally, specifically methylates the adenine in position 1618 of 23S rRNA. In Shewanella sp. (strain ANA-3), this protein is Ribosomal RNA large subunit methyltransferase F.